Reading from the N-terminus, the 121-residue chain is Homeobox protein HD-6 (121 aa).

A DNA-binding region (homeobox) is located at residues 28 to 87 (PKRSRIQLHDWQSMLLEHSFRMNPYPDRIEKYNLFLKTKIPMKNVKIWFQNRRAREKSFY).

Its subcellular location is the nucleus. This is Homeobox protein HD-6 (HD-6) from Encephalitozoon cuniculi (strain GB-M1) (Microsporidian parasite).